Here is a 179-residue protein sequence, read N- to C-terminus: ATP synthase subunit delta (179 aa).

This sequence belongs to the ATPase delta chain family. As to quaternary structure, F-type ATPases have 2 components, F(1) - the catalytic core - and F(0) - the membrane proton channel. F(1) has five subunits: alpha(3), beta(3), gamma(1), delta(1), epsilon(1). F(0) has three main subunits: a(1), b(2) and c(10-14). The alpha and beta chains form an alternating ring which encloses part of the gamma chain. F(1) is attached to F(0) by a central stalk formed by the gamma and epsilon chains, while a peripheral stalk is formed by the delta and b chains.

The protein localises to the cell inner membrane. In terms of biological role, f(1)F(0) ATP synthase produces ATP from ADP in the presence of a proton or sodium gradient. F-type ATPases consist of two structural domains, F(1) containing the extramembraneous catalytic core and F(0) containing the membrane proton channel, linked together by a central stalk and a peripheral stalk. During catalysis, ATP synthesis in the catalytic domain of F(1) is coupled via a rotary mechanism of the central stalk subunits to proton translocation. Its function is as follows. This protein is part of the stalk that links CF(0) to CF(1). It either transmits conformational changes from CF(0) to CF(1) or is implicated in proton conduction. The chain is ATP synthase subunit delta from Anaeromyxobacter sp. (strain K).